The following is an 83-amino-acid chain: Cytochrome b559 subunit alpha (83 aa).

Residues Val21 to Trp35 form a helical membrane-spanning segment. His23 is a binding site for heme.

The protein belongs to the PsbE/PsbF family. Heterodimer of an alpha subunit and a beta subunit. PSII is composed of 1 copy each of membrane proteins PsbA, PsbB, PsbC, PsbD, PsbE, PsbF, PsbH, PsbI, PsbJ, PsbK, PsbL, PsbM, PsbT, PsbX, PsbY, PsbZ, Psb30/Ycf12, at least 3 peripheral proteins of the oxygen-evolving complex and a large number of cofactors. It forms dimeric complexes. It depends on heme b as a cofactor.

Its subcellular location is the plastid. The protein localises to the chloroplast thylakoid membrane. This b-type cytochrome is tightly associated with the reaction center of photosystem II (PSII). PSII is a light-driven water:plastoquinone oxidoreductase that uses light energy to abstract electrons from H(2)O, generating O(2) and a proton gradient subsequently used for ATP formation. It consists of a core antenna complex that captures photons, and an electron transfer chain that converts photonic excitation into a charge separation. The chain is Cytochrome b559 subunit alpha from Chara vulgaris (Common stonewort).